We begin with the raw amino-acid sequence, 483 residues long: MKHYVAVDIGASSGRLILGKLVNEKLQLEEIHRFKNGFTYRDGHERWEIDQLMQEIFIGLEKVKQLGISECVLGIDTWGVDYVLIGASGEKLADPISYRDKRTLNAVQNLTSEYPREYIYKKTGIQFMELNTLYQLYVEERDLLERAEKILLIPDYIGYVLTGVKVAETTNSSTTQMLNLREQLFDKDLLSHLNIDVEKFAPLTDAGTYLGEVKEDWLKMYDIPNCDVVTVATHDTASAVVGTPAEGENWAFLSSGTWSLIGMELSAPINNEVAFKENYTNEWGAYGTYRFLKNIMGLWIVQEIARMDDYKHSFAEMAEEAGNYPYFKQIINVNDARFNNPENMVDEIRLYCRETGQTVPETIGELTNCVYGSLALYYALELEKMTEITGKKIEKLYIVGGGSNVAMLNQLTAKLAGIEVFAGPSEATAIGNLVVQMINQGEIESMRAGRKIIRNSFEIGEFSCGDVRFEEIKERFTKVLEFN.

11-15 (ASSGR) lines the ATP pocket. Residues G79 and 234-236 (HDT) contribute to the substrate site. D235 (proton acceptor) is an active-site residue. T257 contacts ATP. N294 contributes to the substrate binding site. ATP is bound at residue Q302. C352 and C369 form a disulfide bridge. G401 is an ATP binding site.

This sequence belongs to the rhamnulokinase family. Requires Mg(2+) as cofactor.

It carries out the reaction L-rhamnulose + ATP = L-rhamnulose 1-phosphate + ADP + H(+). The protein operates within carbohydrate degradation; L-rhamnose degradation; glycerone phosphate from L-rhamnose: step 2/3. Its function is as follows. Involved in the catabolism of L-rhamnose (6-deoxy-L-mannose). Catalyzes the transfer of the gamma-phosphate group from ATP to the 1-hydroxyl group of L-rhamnulose to yield L-rhamnulose 1-phosphate. This Listeria monocytogenes serovar 1/2a (strain ATCC BAA-679 / EGD-e) protein is Rhamnulokinase.